The chain runs to 180 residues: Acireductone dioxygenase (180 aa).

Fe(2+) contacts are provided by His97, His99, Glu103, and His141. 4 residues coordinate Ni(2+): His97, His99, Glu103, and His141.

It belongs to the acireductone dioxygenase (ARD) family. Monomer. Requires Fe(2+) as cofactor. Ni(2+) is required as a cofactor.

The enzyme catalyses 1,2-dihydroxy-5-(methylsulfanyl)pent-1-en-3-one + O2 = 3-(methylsulfanyl)propanoate + CO + formate + 2 H(+). It catalyses the reaction 1,2-dihydroxy-5-(methylsulfanyl)pent-1-en-3-one + O2 = 4-methylsulfanyl-2-oxobutanoate + formate + 2 H(+). It functions in the pathway amino-acid biosynthesis; L-methionine biosynthesis via salvage pathway; L-methionine from S-methyl-5-thio-alpha-D-ribose 1-phosphate: step 5/6. Its function is as follows. Catalyzes 2 different reactions between oxygen and the acireductone 1,2-dihydroxy-3-keto-5-methylthiopentene (DHK-MTPene) depending upon the metal bound in the active site. Fe-containing acireductone dioxygenase (Fe-ARD) produces formate and 2-keto-4-methylthiobutyrate (KMTB), the alpha-ketoacid precursor of methionine in the methionine recycle pathway. Ni-containing acireductone dioxygenase (Ni-ARD) produces methylthiopropionate, carbon monoxide and formate, and does not lie on the methionine recycle pathway. The polypeptide is Acireductone dioxygenase (Cronobacter sakazakii (Enterobacter sakazakii)).